A 99-amino-acid polypeptide reads, in one-letter code: Turripeptide OL71 (99 aa).

Post-translationally, contains 5 disulfide bonds. In terms of tissue distribution, expressed by the venom duct.

It localises to the secreted. Acts as a neurotoxin by inhibiting an ion channel. In Iotyrris olangoensis (Sea snail), this protein is Turripeptide OL71.